We begin with the raw amino-acid sequence, 424 residues long: Adenylosuccinate synthetase (424 aa).

GTP-binding positions include 12–18 (GDEGKGK) and 40–42 (GHT). Catalysis depends on Asp-13, which acts as the Proton acceptor. 2 residues coordinate Mg(2+): Asp-13 and Gly-40. IMP-binding positions include 13 to 16 (DEGK), 38 to 41 (NAGH), Thr-130, Arg-144, Asn-220, Thr-235, and Arg-299. His-41 acts as the Proton donor in catalysis. 295-301 (VTTGRRR) is a substrate binding site. Residues Arg-301, 327–329 (KLD), and 412–414 (GTG) each bind GTP.

Belongs to the adenylosuccinate synthetase family. As to quaternary structure, homodimer. It depends on Mg(2+) as a cofactor.

It is found in the cytoplasm. It carries out the reaction IMP + L-aspartate + GTP = N(6)-(1,2-dicarboxyethyl)-AMP + GDP + phosphate + 2 H(+). It participates in purine metabolism; AMP biosynthesis via de novo pathway; AMP from IMP: step 1/2. In terms of biological role, plays an important role in the de novo pathway and in the salvage pathway of purine nucleotide biosynthesis. Catalyzes the first committed step in the biosynthesis of AMP from IMP. The sequence is that of Adenylosuccinate synthetase from Aspergillus niger (strain ATCC MYA-4892 / CBS 513.88 / FGSC A1513).